The sequence spans 436 residues: Protein Z-dependent protease inhibitor (436 aa).

The N-terminal stretch at Met1 to Ser20 is a signal peptide. N-linked (GlcNAc...) asparagine glycosylation is found at Asn23, Asn42, and Asn69. The segment at Ala128–Ser145 is heparin-binding. Residues Asn172, Asn189, and Asn287 are each glycosylated (N-linked (GlcNAc...) asparagine).

This sequence belongs to the serpin family. Post-translationally, phosphorylated by FAM20C in the extracellular medium. Expressed by the liver and secreted in plasma.

The protein localises to the secreted. Functionally, inhibits activity of the coagulation protease factor Xa in the presence of PROZ, calcium and phospholipids. Also inhibits factor XIa in the absence of cofactors. The protein is Protein Z-dependent protease inhibitor (Serpina10) of Rattus norvegicus (Rat).